Here is a 143-residue protein sequence, read N- to C-terminus: MAKKIVGFIKLQIPAGKANPSPPIGPALGQRGLNIMEFCKAFNAQTQSMEPGLVLPVVITAFADKSFTFVLKSPPATVLIKKAIKLDKGSSKPHTDKVGKITRAQLEEIAKTKTKDLTAADLDAAVRTIAGTARSMGVTTEGV.

Belongs to the universal ribosomal protein uL11 family. Part of the ribosomal stalk of the 50S ribosomal subunit. Interacts with L10 and the large rRNA to form the base of the stalk. L10 forms an elongated spine to which L12 dimers bind in a sequential fashion forming a multimeric L10(L12)X complex. Post-translationally, one or more lysine residues are methylated.

In terms of biological role, forms part of the ribosomal stalk which helps the ribosome interact with GTP-bound translation factors. This chain is Large ribosomal subunit protein uL11, found in Methylibium petroleiphilum (strain ATCC BAA-1232 / LMG 22953 / PM1).